Reading from the N-terminus, the 497-residue chain is Indoleacetaldoxime dehydratase (497 aa).

Residues 2-20 (EMILSISLCLTTLITLLLL) form a helical membrane-spanning segment. C439 contacts heme.

This sequence belongs to the cytochrome P450 family.

Its subcellular location is the membrane. It catalyses the reaction (E)-(indol-3-yl)acetaldehyde oxime = (indol-3-yl)acetonitrile + H2O. Involved in the biosynthesis of the indole-derived phytoalexin camalexin. Catalyzes the conversion of indole-3-acetaldoxime to indole-3-acetonitrile. Required for resistance to A.brassicicola and B.cinerea. This is Indoleacetaldoxime dehydratase (CYP71A13) from Arabidopsis thaliana (Mouse-ear cress).